Here is a 432-residue protein sequence, read N- to C-terminus: PC-esterase domain-containing protein 1B (432 aa).

2 disordered regions span residues 273–312 and 407–432; these read WESSGQVEERQPQDNIGPQFAQSPPYPFPRPPPLLPSPGL and GPYMPWRERPRRPQKHAPACLESRPQ. The span at 285-294 shows a compositional bias: polar residues; that stretch reads QDNIGPQFAQ. Pro residues predominate over residues 296-312; sequence PPYPFPRPPPLLPSPGL.

It belongs to the PC-esterase family.

The polypeptide is PC-esterase domain-containing protein 1B (Pced1b) (Rattus norvegicus (Rat)).